The sequence spans 730 residues: uncharacterized protein (730 aa).

S82 and S89 each carry phosphoserine. Disordered regions lie at residues 82 to 114 (SPVR…TGSY) and 447 to 468 (NTNH…SKNE). The span at 89-98 (SIQPSNSGKN) shows a compositional bias: polar residues. The segment covering 449-460 (NHNFTTNNNNEN) has biased composition (low complexity). Residues S483 and S651 each carry the phosphoserine modification.

This is an uncharacterized protein from Saccharomyces cerevisiae (strain ATCC 204508 / S288c) (Baker's yeast).